Reading from the N-terminus, the 557-residue chain is Urocanate hydratase (557 aa).

NAD(+)-binding positions include 48-49 (GG), Gln126, 178-180 (GMG), Asp198, Arg203, 244-245 (NA), 265-269 (QTSAH), 274-275 (YL), and Tyr323. Residue Cys411 is part of the active site. Gly493 provides a ligand contact to NAD(+).

The protein belongs to the urocanase family. NAD(+) is required as a cofactor.

It is found in the cytoplasm. The catalysed reaction is 4-imidazolone-5-propanoate = trans-urocanate + H2O. The protein operates within amino-acid degradation; L-histidine degradation into L-glutamate; N-formimidoyl-L-glutamate from L-histidine: step 2/3. Functionally, catalyzes the conversion of urocanate to 4-imidazolone-5-propionate. The polypeptide is Urocanate hydratase (Beutenbergia cavernae (strain ATCC BAA-8 / DSM 12333 / CCUG 43141 / JCM 11478 / NBRC 16432 / NCIMB 13614 / HKI 0122)).